The following is a 329-amino-acid chain: GTP 3',8-cyclase (329 aa).

Positions Ala8–Ala234 constitute a Radical SAM core domain. Arg17 contributes to the GTP binding site. Residues Cys24 and Cys28 each contribute to the [4Fe-4S] cluster site. Tyr30 contacts S-adenosyl-L-methionine. Cys31 provides a ligand contact to [4Fe-4S] cluster. Position 68 (Arg68) interacts with GTP. Gly72 contacts S-adenosyl-L-methionine. A GTP-binding site is contributed by Thr99. Ser123 contributes to the S-adenosyl-L-methionine binding site. Residue Lys160 participates in GTP binding. An S-adenosyl-L-methionine-binding site is contributed by Met194. The [4Fe-4S] cluster site is built by Cys257 and Cys260. Arg262–Arg264 is a binding site for GTP. Cys274 serves as a coordination point for [4Fe-4S] cluster.

The protein belongs to the radical SAM superfamily. MoaA family. In terms of assembly, monomer and homodimer. Requires [4Fe-4S] cluster as cofactor.

It catalyses the reaction GTP + AH2 + S-adenosyl-L-methionine = (8S)-3',8-cyclo-7,8-dihydroguanosine 5'-triphosphate + 5'-deoxyadenosine + L-methionine + A + H(+). It participates in cofactor biosynthesis; molybdopterin biosynthesis. In terms of biological role, catalyzes the cyclization of GTP to (8S)-3',8-cyclo-7,8-dihydroguanosine 5'-triphosphate. The chain is GTP 3',8-cyclase from Salmonella heidelberg (strain SL476).